Reading from the N-terminus, the 378-residue chain is Polar flagellin B/D (378 aa).

Coiled coils occupy residues 103–128 (SNSK…RIAE) and 311–340 (AFQN…IKDT).

Belongs to the bacterial flagellin family. Heteromer of multiple flagellin subunits including FlaA, FlaB/D, FlaC, FlaE and FlaF.

It localises to the secreted. The protein localises to the bacterial flagellum. Functionally, flagellin is the subunit protein which polymerizes to form the filaments of bacterial flagella. FlaB/D is not essential for polar flagellar synthesis and swimming motility. Homomer of FlaB/D is not able to form a functional filament. In Vibrio parahaemolyticus serotype O3:K6 (strain RIMD 2210633), this protein is Polar flagellin B/D (flaB).